Consider the following 742-residue polypeptide: Protein-associating with the carboxyl-terminal domain of ezrin (742 aa).

The N-myristoyl glycine moiety is linked to residue Gly2. The 244-residue stretch at 2 to 245 folds into the Protein kinase domain; that stretch reads GSENSALKSY…LCTLLSHDFF (244 aa). 4 HEAT repeats span residues 199 to 238, 285 to 323, 333 to 370, and 372 to 409; these read ESLLTILNEQVSADVLSSFQQTLHSTLLNPIPKCRPALCT, LIASRLVPLLLNQLVFAEPVAVKSFLPYLLGPKKDHAQG, LFQSRVIPVLLQLFEVHEEHVRMVLLSHIEAYVEHFTQ, and QLKKVILPQVLLGLRDTSDSIVAITLHSLAVLVSLLGP. The residue at position 439 (Ser439) is a Phosphoserine. Disordered stretches follow at residues 506 to 544, 568 to 598, and 629 to 652; these read LSDVKNTSEDSENFPSSSKKSEEWPDWSEPEEPENQTVN, SSWDDCEPSSLDTKVNPGGGITATKPVTSGE, and GDDADQIEPPKVSSQERPLKVPSE. The segment covering 529–539 has biased composition (acidic residues); sequence WPDWSEPEEPE. The segment at 548-742 is interaction with EZR; that stretch reads WPREPCDDVK…GELNWEDNNW (195 aa). Phosphoserine is present on Ser707. Residues 723-742 are disordered; sequence EGEAEGWEEEGELNWEDNNW.

This sequence belongs to the protein kinase superfamily. As to quaternary structure, interacts with EZR/VIL2 C-terminal domain. May be myristoylated; myristoylation may target it to Golgi compartment. Post-translationally, phosphorylated. Ubiquitously expressed.

It is found in the cytoplasm. Its subcellular location is the golgi apparatus. It localises to the cell projection. The protein resides in the lamellipodium. Its function is as follows. May play a role in regulating cell adhesion/migration complexes in migrating cells. This chain is Protein-associating with the carboxyl-terminal domain of ezrin (SCYL3), found in Homo sapiens (Human).